Reading from the N-terminus, the 819-residue chain is Lon protease (819 aa).

Residues 1–36 (MDSTTNSDSPILDPNPEDVEKLLDESEEESEDQSTE) are disordered. Residues 43–240 (LFILPLNKRP…KALILLKKEL (198 aa)) form the Lon N-terminal domain. 393–400 (GPPGVGKT) serves as a coordination point for ATP. The Lon proteolytic domain occupies 635 to 817 (STPVGVATGL…DDVLKVAFPK (183 aa)). Residues Ser-723 and Lys-766 contribute to the active site.

It belongs to the peptidase S16 family. In terms of assembly, homohexamer. Organized in a ring with a central cavity.

The protein localises to the cytoplasm. It carries out the reaction Hydrolysis of proteins in presence of ATP.. In terms of biological role, ATP-dependent serine protease that mediates the selective degradation of mutant and abnormal proteins as well as certain short-lived regulatory proteins. Required for cellular homeostasis and for survival from DNA damage and developmental changes induced by stress. Degrades polypeptides processively to yield small peptide fragments that are 5 to 10 amino acids long. Binds to DNA in a double-stranded, site-specific manner. This is Lon protease from Chlamydia pneumoniae (Chlamydophila pneumoniae).